Consider the following 371-residue polypeptide: MKLKSLQLVNFRNYKKLHLEFNGKVNLLVGKNGQGKTNIVESIYMLSFGKSFRTNKDKEMVRFNSENLYIGGSFSKYNKYSLIELIIGKDKKGIRINKVPLQKIQELLGNLNVVIFSPEDLRLVKEGPKERRAFIDKEISQIIPKYYKYLTNYNKTLSQRSRVLKNIHVDEALLDVYDDTLAKYGSYIYILRRDFIKKIANISENMHMNLTNGVERLSIRYKNQINITDEDTIDTVYNKFLAKLSSNRPNDIESKTTRYGIHKDDLNIFINDLDARLFGSQGQQRTASISLKLSEIELIKNEVEEYPVLILDDVFSELDEARQKLLVNNLSNVQMFITSAEVSHKKIFDEKNVTIFNIENGDVISIENGGN.

Residue 30 to 37 (GKNGQGKT) coordinates ATP.

Belongs to the RecF family.

Its subcellular location is the cytoplasm. In terms of biological role, the RecF protein is involved in DNA metabolism; it is required for DNA replication and normal SOS inducibility. RecF binds preferentially to single-stranded, linear DNA. It also seems to bind ATP. The polypeptide is DNA replication and repair protein RecF (Clostridioides difficile (strain 630) (Peptoclostridium difficile)).